Here is a 206-residue protein sequence, read N- to C-terminus: Type III pantothenate kinase (206 aa).

5–12 contacts ATP; it reads DIGNSTAK. Residues Tyr-67 and 72–75 each bind substrate; that span reads GVDR. Asp-74 functions as the Proton acceptor in the catalytic mechanism. Asp-89 is a binding site for K(+). Ser-92 provides a ligand contact to ATP. Substrate is bound at residue Thr-144.

It belongs to the type III pantothenate kinase family. In terms of assembly, homodimer. It depends on NH4(+) as a cofactor. The cofactor is K(+).

The protein localises to the cytoplasm. It carries out the reaction (R)-pantothenate + ATP = (R)-4'-phosphopantothenate + ADP + H(+). The protein operates within cofactor biosynthesis; coenzyme A biosynthesis; CoA from (R)-pantothenate: step 1/5. Catalyzes the phosphorylation of pantothenate (Pan), the first step in CoA biosynthesis. This Campylobacter hominis (strain ATCC BAA-381 / DSM 21671 / CCUG 45161 / LMG 19568 / NCTC 13146 / CH001A) protein is Type III pantothenate kinase.